A 360-amino-acid polypeptide reads, in one-letter code: Phospho-N-acetylmuramoyl-pentapeptide-transferase (360 aa).

Transmembrane regions (helical) follow at residues 25-45 (RGIL…PWMI), 73-93 (TMGG…WADL), 97-117 (YVWV…VDDY), 142-162 (IGAA…TLIV), 167-187 (SVEI…IVGS), 199-219 (GLAI…CYLS), 236-256 (AGEL…FLWF), 263-283 (VFMG…IAVI), 288-308 (IVLF…MIQV), and 338-358 (VIVR…ATLK).

The protein belongs to the glycosyltransferase 4 family. MraY subfamily. The cofactor is Mg(2+).

Its subcellular location is the cell inner membrane. The catalysed reaction is UDP-N-acetyl-alpha-D-muramoyl-L-alanyl-gamma-D-glutamyl-meso-2,6-diaminopimeloyl-D-alanyl-D-alanine + di-trans,octa-cis-undecaprenyl phosphate = di-trans,octa-cis-undecaprenyl diphospho-N-acetyl-alpha-D-muramoyl-L-alanyl-D-glutamyl-meso-2,6-diaminopimeloyl-D-alanyl-D-alanine + UMP. It functions in the pathway cell wall biogenesis; peptidoglycan biosynthesis. Its function is as follows. Catalyzes the initial step of the lipid cycle reactions in the biosynthesis of the cell wall peptidoglycan: transfers peptidoglycan precursor phospho-MurNAc-pentapeptide from UDP-MurNAc-pentapeptide onto the lipid carrier undecaprenyl phosphate, yielding undecaprenyl-pyrophosphoryl-MurNAc-pentapeptide, known as lipid I. This is Phospho-N-acetylmuramoyl-pentapeptide-transferase from Pseudomonas aeruginosa (strain LESB58).